The following is a 160-amino-acid chain: Transcription elongation factor GreA (160 aa).

Residues 3 to 84 (NIVDDKILLT…SKAKIIKADL (82 aa)) are a coiled coil.

The protein belongs to the GreA/GreB family.

Necessary for efficient RNA polymerase transcription elongation past template-encoded arresting sites. The arresting sites in DNA have the property of trapping a certain fraction of elongating RNA polymerases that pass through, resulting in locked ternary complexes. Cleavage of the nascent transcript by cleavage factors such as GreA or GreB allows the resumption of elongation from the new 3'terminus. GreA releases sequences of 2 to 3 nucleotides. This is Transcription elongation factor GreA from Mesomycoplasma hyopneumoniae (strain J / ATCC 25934 / NCTC 10110) (Mycoplasma hyopneumoniae).